Here is a 466-residue protein sequence, read N- to C-terminus: Ribulose bisphosphate carboxylase large chain (466 aa).

Position 5 is an N6,N6,N6-trimethyllysine (K5). Substrate is bound by residues N114 and T164. The active-site Proton acceptor is the K166. Position 168 (K168) interacts with substrate. Residues K192, D194, and E195 each contribute to the Mg(2+) site. An N6-carboxylysine modification is found at K192. Catalysis depends on H285, which acts as the Proton acceptor. Residues R286, H318, and S370 each coordinate substrate.

Belongs to the RuBisCO large chain family. Type I subfamily. In terms of assembly, heterohexadecamer of 8 large chains and 8 small chains; disulfide-linked. The disulfide link is formed within the large subunit homodimers. Requires Mg(2+) as cofactor. Post-translationally, the disulfide bond which can form in the large chain dimeric partners within the hexadecamer appears to be associated with oxidative stress and protein turnover.

It is found in the plastid. The protein resides in the chloroplast. The catalysed reaction is 2 (2R)-3-phosphoglycerate + 2 H(+) = D-ribulose 1,5-bisphosphate + CO2 + H2O. It carries out the reaction D-ribulose 1,5-bisphosphate + O2 = 2-phosphoglycolate + (2R)-3-phosphoglycerate + 2 H(+). In terms of biological role, ruBisCO catalyzes two reactions: the carboxylation of D-ribulose 1,5-bisphosphate, the primary event in carbon dioxide fixation, as well as the oxidative fragmentation of the pentose substrate in the photorespiration process. Both reactions occur simultaneously and in competition at the same active site. The chain is Ribulose bisphosphate carboxylase large chain from Cercidiphyllum japonicum (Katsura tree).